The sequence spans 292 residues: Elongation factor Ts (292 aa).

Positions Thr-79–Val-82 are involved in Mg(2+) ion dislocation from EF-Tu.

It belongs to the EF-Ts family.

The protein localises to the cytoplasm. In terms of biological role, associates with the EF-Tu.GDP complex and induces the exchange of GDP to GTP. It remains bound to the aminoacyl-tRNA.EF-Tu.GTP complex up to the GTP hydrolysis stage on the ribosome. The sequence is that of Elongation factor Ts from Mycoplasmoides gallisepticum (strain R(low / passage 15 / clone 2)) (Mycoplasma gallisepticum).